The primary structure comprises 318 residues: Transaldolase (318 aa).

Catalysis depends on lysine 131, which acts as the Schiff-base intermediate with substrate.

It belongs to the transaldolase family. Type 1 subfamily. As to quaternary structure, homodimer.

Its subcellular location is the cytoplasm. The enzyme catalyses D-sedoheptulose 7-phosphate + D-glyceraldehyde 3-phosphate = D-erythrose 4-phosphate + beta-D-fructose 6-phosphate. The protein operates within carbohydrate degradation; pentose phosphate pathway; D-glyceraldehyde 3-phosphate and beta-D-fructose 6-phosphate from D-ribose 5-phosphate and D-xylulose 5-phosphate (non-oxidative stage): step 2/3. In terms of biological role, transaldolase is important for the balance of metabolites in the pentose-phosphate pathway. This Cellvibrio japonicus (strain Ueda107) (Pseudomonas fluorescens subsp. cellulosa) protein is Transaldolase.